The primary structure comprises 617 residues: DNA mismatch repair protein MutL (617 aa).

Belongs to the DNA mismatch repair MutL/HexB family.

Functionally, this protein is involved in the repair of mismatches in DNA. It is required for dam-dependent methyl-directed DNA mismatch repair. May act as a 'molecular matchmaker', a protein that promotes the formation of a stable complex between two or more DNA-binding proteins in an ATP-dependent manner without itself being part of a final effector complex. This Bartonella tribocorum (strain CIP 105476 / IBS 506) protein is DNA mismatch repair protein MutL.